A 245-amino-acid polypeptide reads, in one-letter code: tRNA (guanine-N(1)-)-methyltransferase (245 aa).

Residues G114 and 134–139 (IGDYIL) contribute to the S-adenosyl-L-methionine site.

Belongs to the RNA methyltransferase TrmD family. In terms of assembly, homodimer.

The protein resides in the cytoplasm. The catalysed reaction is guanosine(37) in tRNA + S-adenosyl-L-methionine = N(1)-methylguanosine(37) in tRNA + S-adenosyl-L-homocysteine + H(+). Its function is as follows. Specifically methylates guanosine-37 in various tRNAs. This is tRNA (guanine-N(1)-)-methyltransferase from Listeria monocytogenes serotype 4b (strain CLIP80459).